Here is a 317-residue protein sequence, read N- to C-terminus: Carbonic anhydrase 5B, mitochondrial (317 aa).

Residues 1–33 (MVVMNSLRVILQASPGKLLWRKFQIPRFMPARP) constitute a mitochondrion transit peptide. The Alpha-carbonic anhydrase domain occupies 37 to 296 (YTCTYKTRNR…LMNRTVRSSF (260 aa)). Residues His130, His132, and His155 each contribute to the Zn(2+) site. 235–236 (TT) is a substrate binding site.

This sequence belongs to the alpha-carbonic anhydrase family. Requires Zn(2+) as cofactor. As to expression, strongest expression in heart, pancreas, kidney, placenta, lung, and skeletal muscle. Not expressed in liver.

The protein resides in the mitochondrion. It carries out the reaction hydrogencarbonate + H(+) = CO2 + H2O. Its activity is regulated as follows. Inhibited by coumarins, sulfonamide derivatives such as acetazolamide (AZA), saccharin and Foscarnet (phosphonoformate trisodium salt). Its function is as follows. Mitochondrial carbonic anhydrase that catalyzes the reversible conversion of carbon dioxide to bicarbonate/HCO3. This is Carbonic anhydrase 5B, mitochondrial (CA5B) from Homo sapiens (Human).